Here is a 673-residue protein sequence, read N- to C-terminus: DNA ligase (673 aa).

Residues 33-37 (DHQYD), 83-84 (SL), and Glu117 contribute to the NAD(+) site. Residue Lys119 is the N6-AMP-lysine intermediate of the active site. NAD(+) is bound by residues Arg140, Glu175, Lys282, and Lys306. Zn(2+)-binding residues include Cys400, Cys403, Cys418, and Cys424. The BRCT domain maps to 592–673 (RGSSAISGKT…WVKMVEDARS (82 aa)).

Belongs to the NAD-dependent DNA ligase family. LigA subfamily. Mg(2+) is required as a cofactor. It depends on Mn(2+) as a cofactor.

It catalyses the reaction NAD(+) + (deoxyribonucleotide)n-3'-hydroxyl + 5'-phospho-(deoxyribonucleotide)m = (deoxyribonucleotide)n+m + AMP + beta-nicotinamide D-nucleotide.. DNA ligase that catalyzes the formation of phosphodiester linkages between 5'-phosphoryl and 3'-hydroxyl groups in double-stranded DNA using NAD as a coenzyme and as the energy source for the reaction. It is essential for DNA replication and repair of damaged DNA. This chain is DNA ligase, found in Anaplasma marginale (strain St. Maries).